A 209-amino-acid chain; its full sequence is MSPQRPQRAFFCSEGAKKKKKPKYRFGFPMALYFFFEKLNFSYWTSTTVSPNHYVCVLPAAASQALASVLGGELFLGKSQLVEATAFDLTGQEVAAGDFLVFLKNNGIVLSYSFYFFLLKKRITFFLHGGEKVCSVEAFYSNANWLEREISEMFGVSYLLKKDSRNLLLDYGSSFNPFLKKFPSTGHTEVVFNSFLKTTAYVQNASVEL.

Belongs to the complex I 30 kDa subunit family. As to quaternary structure, complex I is composed of about 30 different subunits.

Its subcellular location is the mitochondrion inner membrane. It catalyses the reaction a ubiquinone + NADH + 5 H(+)(in) = a ubiquinol + NAD(+) + 4 H(+)(out). Its function is as follows. Core subunit of the mitochondrial membrane respiratory chain NADH dehydrogenase (Complex I) that is believed to belong to the minimal assembly required for catalysis. Complex I functions in the transfer of electrons from NADH to the respiratory chain. The immediate electron acceptor for the enzyme is believed to be ubiquinone. This Paramecium primaurelia protein is NADH-ubiquinone oxidoreductase subunit 9 (NAD9).